Reading from the N-terminus, the 150-residue chain is Ribonuclease H (150 aa).

Positions 2-143 (PAPILDIFVD…ADELANRAIE (142 aa)) constitute an RNase H type-1 domain. Residues Asp11, Glu49, Asp71, and Asp135 each contribute to the Mg(2+) site.

Belongs to the RNase H family. As to quaternary structure, monomer. It depends on Mg(2+) as a cofactor.

It localises to the cytoplasm. The enzyme catalyses Endonucleolytic cleavage to 5'-phosphomonoester.. In terms of biological role, endonuclease that specifically degrades the RNA of RNA-DNA hybrids. This is Ribonuclease H from Dichelobacter nodosus (strain VCS1703A).